We begin with the raw amino-acid sequence, 459 residues long: Siroheme synthase (459 aa).

The precorrin-2 dehydrogenase /sirohydrochlorin ferrochelatase stretch occupies residues 1–204 (MDHLPIFCQL…ADEKAVNATT (204 aa)). NAD(+) contacts are provided by residues 22 to 23 (DV) and 43 to 44 (LT). Position 128 is a phosphoserine (S128). Residues 216–459 (GEVVLVGAGP…KLNWFSNYYD (244 aa)) are uroporphyrinogen-III C-methyltransferase. Residue P225 participates in S-adenosyl-L-methionine binding. Residue D248 is the Proton acceptor of the active site. Catalysis depends on K270, which acts as the Proton donor. S-adenosyl-L-methionine is bound by residues 301–303 (GGD), I306, 331–332 (TA), M382, and G411.

It in the N-terminal section; belongs to the precorrin-2 dehydrogenase / sirohydrochlorin ferrochelatase family. The protein in the C-terminal section; belongs to the precorrin methyltransferase family.

The enzyme catalyses uroporphyrinogen III + 2 S-adenosyl-L-methionine = precorrin-2 + 2 S-adenosyl-L-homocysteine + H(+). It carries out the reaction precorrin-2 + NAD(+) = sirohydrochlorin + NADH + 2 H(+). It catalyses the reaction siroheme + 2 H(+) = sirohydrochlorin + Fe(2+). Its pathway is cofactor biosynthesis; adenosylcobalamin biosynthesis; precorrin-2 from uroporphyrinogen III: step 1/1. It functions in the pathway cofactor biosynthesis; adenosylcobalamin biosynthesis; sirohydrochlorin from precorrin-2: step 1/1. The protein operates within porphyrin-containing compound metabolism; siroheme biosynthesis; precorrin-2 from uroporphyrinogen III: step 1/1. It participates in porphyrin-containing compound metabolism; siroheme biosynthesis; siroheme from sirohydrochlorin: step 1/1. Its pathway is porphyrin-containing compound metabolism; siroheme biosynthesis; sirohydrochlorin from precorrin-2: step 1/1. Multifunctional enzyme that catalyzes the SAM-dependent methylations of uroporphyrinogen III at position C-2 and C-7 to form precorrin-2 via precorrin-1. Then it catalyzes the NAD-dependent ring dehydrogenation of precorrin-2 to yield sirohydrochlorin. Finally, it catalyzes the ferrochelation of sirohydrochlorin to yield siroheme. The polypeptide is Siroheme synthase (Salmonella agona (strain SL483)).